The primary structure comprises 1013 residues: EF-hand calcium-binding domain-containing protein 6 (1013 aa).

5 consecutive EF-hand domains span residues 20–55, 145–180, 251–286, 287–322, and 352–387; these read KNIK…FCLK, KSYE…FIYQ, DRSA…VAIK, LSDS…NCRM, and RNLQ…FCPF. A disordered region spans residues 441-460; the sequence is QKDEQQQPDLSERTKPTEDK. EF-hand domains are found at residues 482 to 517, 589 to 624, 695 to 730, 731 to 766, 812 to 847, and 917 to 952; these read QQDP…TGMP, ESFR…LLLN, NRWS…FDIP, LTPR…NYSP, DLHQ…CGCS, and SSQL…FCYK. Residues Asp-602, Asp-604, Asp-606, and Asp-613 each contribute to the Ca(2+) site. Thr-732 bears the Phosphothreonine mark.

In terms of assembly, microtubule inner protein component of sperm flagellar doublet microtubules. Binds PARK7. Part of a ternary complex containing PARK7, EFCAB6/DJBP and AR.

Its subcellular location is the nucleus. It is found in the cytoplasm. It localises to the cytoskeleton. The protein localises to the flagellum axoneme. Its function is as follows. Negatively regulates the androgen receptor by recruiting histone deacetylase complex, and protein DJ-1 antagonizes this inhibition by abrogation of this complex. Microtubule inner protein (MIP) part of the dynein-decorated doublet microtubules (DMTs) in cilia axoneme, which is required for motile cilia beating. This chain is EF-hand calcium-binding domain-containing protein 6 (EFCAB6), found in Pongo abelii (Sumatran orangutan).